The following is a 461-amino-acid chain: tRNA-2-methylthio-N(6)-dimethylallyladenosine synthase (461 aa).

An MTTase N-terminal domain is found at 25–143 (PTYSIITHGC…LPYLIDRHLS (119 aa)). Positions 34, 70, 104, 179, 183, and 186 each coordinate [4Fe-4S] cluster. Positions 165-395 (RDNEYVGYVN…LDVAYPIFYE (231 aa)) constitute a Radical SAM core domain. A TRAM domain is found at 398-461 (KSYLGTIQEV…SFALTGEMVD (64 aa)).

Belongs to the methylthiotransferase family. MiaB subfamily. Monomer. [4Fe-4S] cluster is required as a cofactor.

It is found in the cytoplasm. It carries out the reaction N(6)-dimethylallyladenosine(37) in tRNA + (sulfur carrier)-SH + AH2 + 2 S-adenosyl-L-methionine = 2-methylsulfanyl-N(6)-dimethylallyladenosine(37) in tRNA + (sulfur carrier)-H + 5'-deoxyadenosine + L-methionine + A + S-adenosyl-L-homocysteine + 2 H(+). Catalyzes the methylthiolation of N6-(dimethylallyl)adenosine (i(6)A), leading to the formation of 2-methylthio-N6-(dimethylallyl)adenosine (ms(2)i(6)A) at position 37 in tRNAs that read codons beginning with uridine. The chain is tRNA-2-methylthio-N(6)-dimethylallyladenosine synthase from Finegoldia magna (strain ATCC 29328 / DSM 20472 / WAL 2508) (Peptostreptococcus magnus).